A 321-amino-acid polypeptide reads, in one-letter code: Ribonuclease Z (321 aa).

The Zn(2+) site is built by H62, H64, D66, H67, H139, D209, and H268. D66 (proton acceptor) is an active-site residue.

This sequence belongs to the RNase Z family. In terms of assembly, homodimer. It depends on Zn(2+) as a cofactor.

It catalyses the reaction Endonucleolytic cleavage of RNA, removing extra 3' nucleotides from tRNA precursor, generating 3' termini of tRNAs. A 3'-hydroxy group is left at the tRNA terminus and a 5'-phosphoryl group is left at the trailer molecule.. Functionally, zinc phosphodiesterase, which displays some tRNA 3'-processing endonuclease activity. Probably involved in tRNA maturation, by removing a 3'-trailer from precursor tRNA. The chain is Ribonuclease Z from Pseudomonas putida (strain W619).